Reading from the N-terminus, the 320-residue chain is Cytochrome f (320 aa).

A signal peptide spans 1 to 35; sequence MQNRNTFSWVKEQMTRSIFVSMMIYIITRASISNA. 4 residues coordinate heme: tyrosine 36, cysteine 56, cysteine 59, and histidine 60. A helical membrane pass occupies residues 286-306; the sequence is IQGLFLFLASVILAQIFLVLK.

Belongs to the cytochrome f family. The 4 large subunits of the cytochrome b6-f complex are cytochrome b6, subunit IV (17 kDa polypeptide, petD), cytochrome f and the Rieske protein, while the 4 small subunits are PetG, PetL, PetM and PetN. The complex functions as a dimer. The cofactor is heme.

It localises to the plastid. The protein localises to the chloroplast thylakoid membrane. Functionally, component of the cytochrome b6-f complex, which mediates electron transfer between photosystem II (PSII) and photosystem I (PSI), cyclic electron flow around PSI, and state transitions. The polypeptide is Cytochrome f (Amborella trichopoda).